We begin with the raw amino-acid sequence, 355 residues long: Ribosomal RNA large subunit methyltransferase M (355 aa).

S-adenosyl-L-methionine is bound by residues serine 191, 224 to 227, aspartate 243, aspartate 263, and aspartate 279; that span reads APGG. Catalysis depends on lysine 308, which acts as the Proton acceptor.

It belongs to the class I-like SAM-binding methyltransferase superfamily. RNA methyltransferase RlmE family. RlmM subfamily. In terms of assembly, monomer.

Its subcellular location is the cytoplasm. The catalysed reaction is cytidine(2498) in 23S rRNA + S-adenosyl-L-methionine = 2'-O-methylcytidine(2498) in 23S rRNA + S-adenosyl-L-homocysteine + H(+). Its function is as follows. Catalyzes the 2'-O-methylation at nucleotide C2498 in 23S rRNA. The protein is Ribosomal RNA large subunit methyltransferase M of Stenotrophomonas maltophilia (strain R551-3).